A 246-amino-acid chain; its full sequence is MSHESIEKNLNFVKKLNNVNDSVLKIENLALAYDNKKVLDGINISIEKGDIVTILGPNGGGKTSLMKVVAGISKNYTGSVIFADNIKISYMPQNFSISKLMPITVEYFLLNSFSKKLKKNQSVITEVIELVGIGSILKNQVLEISAGQMQLLLLAHCLIAEPDLIILDEPVSAMDINARAKFYDIIGEIAKKRLISILMTSHDLSSIVPCSDYIICINHTIYCQGKPGKIMEDRTLGEIFSSYIAK.

The region spanning 24–244 is the ABC transporter domain; sequence LKIENLALAY…TLGEIFSSYI (221 aa). 56-63 provides a ligand contact to ATP; it reads GPNGGGKT.

The protein belongs to the ABC transporter superfamily. Zinc importer (TC 3.A.1.15.5) family. As to quaternary structure, the complex is composed of two ATP-binding proteins (ZnuC), two transmembrane proteins (ZnuB) and a solute-binding protein (ZnuA).

It is found in the cell membrane. It carries out the reaction Zn(2+)(out) + ATP(in) + H2O(in) = Zn(2+)(in) + ADP(in) + phosphate(in) + H(+)(in). Part of the ABC transporter complex ZnuABC involved in zinc import. Responsible for energy coupling to the transport system. The chain is Zinc import ATP-binding protein ZnuC from Wolbachia sp. subsp. Brugia malayi (strain TRS).